A 247-amino-acid polypeptide reads, in one-letter code: Protein At-4/1 (247 aa).

Coiled coils occupy residues 39–126 (VESS…YKIR) and 182–247 (LLME…LSSS).

In terms of assembly, interacts with viral tomato spotted wilt virus (TSWV) movement protein NSM, which is involved in cell-to cell spread of viral genome and enlargement of the host plasmodesmata size exclusion limit (SEL). In terms of tissue distribution, expressed in leaves (at protein level).

Its subcellular location is the endoplasmic reticulum. The protein localises to the cell junction. The protein resides in the plasmodesma. In terms of biological role, involved in intra- and inter-cellular trafficking through plasmodesmata (PD). This is Protein At-4/1 from Arabidopsis thaliana (Mouse-ear cress).